We begin with the raw amino-acid sequence, 232 residues long: 2,3,4,5-tetrahydropyridine-2,6-dicarboxylate N-acetyltransferase (232 aa).

The protein belongs to the transferase hexapeptide repeat family. DapH subfamily.

The catalysed reaction is (S)-2,3,4,5-tetrahydrodipicolinate + acetyl-CoA + H2O = L-2-acetamido-6-oxoheptanedioate + CoA. Its pathway is amino-acid biosynthesis; L-lysine biosynthesis via DAP pathway; LL-2,6-diaminopimelate from (S)-tetrahydrodipicolinate (acetylase route): step 1/3. Functionally, catalyzes the transfer of an acetyl group from acetyl-CoA to tetrahydrodipicolinate. The chain is 2,3,4,5-tetrahydropyridine-2,6-dicarboxylate N-acetyltransferase from Streptococcus pneumoniae serotype 4 (strain ATCC BAA-334 / TIGR4).